A 215-amino-acid chain; its full sequence is Adenylate kinase (215 aa).

Residue 10-15 (GAGKGT) participates in ATP binding. The segment at 30-59 (STGDIFRDAVNQGSELGQEAQKYMSSGQLV) is NMP. Residues Thr-31, Arg-36, 57–59 (QLV), 85–88 (GFPR), and Gln-92 each bind AMP. The interval 126 to 163 (GRISCRECKRVYNLNFNPPREQGKCDSCGGELVQRNDD) is LID. Arg-127 is a binding site for ATP. Residues Cys-130 and Cys-133 each coordinate Zn(2+). 136 to 137 (VY) provides a ligand contact to ATP. Cys-150 and Cys-153 together coordinate Zn(2+). Residues Arg-160 and Arg-171 each coordinate AMP. Residue Arg-199 participates in ATP binding.

This sequence belongs to the adenylate kinase family. As to quaternary structure, monomer.

It localises to the cytoplasm. The enzyme catalyses AMP + ATP = 2 ADP. It participates in purine metabolism; AMP biosynthesis via salvage pathway; AMP from ADP: step 1/1. Its function is as follows. Catalyzes the reversible transfer of the terminal phosphate group between ATP and AMP. Plays an important role in cellular energy homeostasis and in adenine nucleotide metabolism. The protein is Adenylate kinase of Syntrophomonas wolfei subsp. wolfei (strain DSM 2245B / Goettingen).